A 372-amino-acid chain; its full sequence is Queuine tRNA-ribosyltransferase (372 aa).

Asp89 serves as the catalytic Proton acceptor. Residues 89 to 93 (DSGGF), Asp161, and Gly232 contribute to the substrate site. An RNA binding region spans residues 262–268 (GIGDLPS). Asp281 (nucleophile) is an active-site residue. An RNA binding; important for wobble base 34 recognition region spans residues 286-290 (TKAAR). 4 residues coordinate Zn(2+): Cys319, Cys321, Cys324, and His351.

It belongs to the queuine tRNA-ribosyltransferase family. In terms of assembly, homodimer. Within each dimer, one monomer is responsible for RNA recognition and catalysis, while the other monomer binds to the replacement base PreQ1. The cofactor is Zn(2+).

The enzyme catalyses 7-aminomethyl-7-carbaguanine + guanosine(34) in tRNA = 7-aminomethyl-7-carbaguanosine(34) in tRNA + guanine. Its pathway is tRNA modification; tRNA-queuosine biosynthesis. Its function is as follows. Catalyzes the base-exchange of a guanine (G) residue with the queuine precursor 7-aminomethyl-7-deazaguanine (PreQ1) at position 34 (anticodon wobble position) in tRNAs with GU(N) anticodons (tRNA-Asp, -Asn, -His and -Tyr). Catalysis occurs through a double-displacement mechanism. The nucleophile active site attacks the C1' of nucleotide 34 to detach the guanine base from the RNA, forming a covalent enzyme-RNA intermediate. The proton acceptor active site deprotonates the incoming PreQ1, allowing a nucleophilic attack on the C1' of the ribose to form the product. After dissociation, two additional enzymatic reactions on the tRNA convert PreQ1 to queuine (Q), resulting in the hypermodified nucleoside queuosine (7-(((4,5-cis-dihydroxy-2-cyclopenten-1-yl)amino)methyl)-7-deazaguanosine). This Chlamydia pneumoniae (Chlamydophila pneumoniae) protein is Queuine tRNA-ribosyltransferase.